The primary structure comprises 313 residues: Metaxin-3 (313 aa).

The tract at residues 280–313 (EKMDDNLRSSPQHRPHRHEAKPSAPASDRNSTPA) is disordered.

The protein belongs to the metaxin family. As to quaternary structure, part of a large protein complex spanning both mitochondrial membranes termed the mitochondrial intermembrane space bridging (MIB) complex.

The protein resides in the mitochondrion. It localises to the mitochondrion outer membrane. Functionally, could function in transport of proteins into the mitochondrion. The chain is Metaxin-3 (mtx3) from Danio rerio (Zebrafish).